We begin with the raw amino-acid sequence, 740 residues long: Dipeptidyl peptidase family member 6 (740 aa).

Position 1 (methionine 1) is a topological domain, cytoplasmic. The helical; Signal-anchor for type II membrane protein transmembrane segment at 2–22 (LFLPILILNLLIITHAIDIIP) threads the bilayer. Over 23-740 (REVLFQDPKY…VMNRIFPVQG (718 aa)) the chain is Lumenal. 3 N-linked (GlcNAc...) asparagine glycosylation sites follow: asparagine 108, asparagine 308, and asparagine 506. Catalysis depends on charge relay system residues serine 516, aspartate 604, and histidine 636. A disulfide bridge connects residues cysteine 535 and cysteine 658. Residue asparagine 672 is glycosylated (N-linked (GlcNAc...) asparagine).

This sequence belongs to the peptidase S9B family. DPPIV subfamily.

The protein localises to the cell membrane. Functionally, removes N-terminal dipeptides sequentially from polypeptides. Essential for control of distal tip cell migration. In Caenorhabditis elegans, this protein is Dipeptidyl peptidase family member 6 (dpf-6).